A 549-amino-acid chain; its full sequence is Undecaprenyl phosphate-alpha-4-amino-4-deoxy-L-arabinose arabinosyl transferase 1 (549 aa).

12 helical membrane-spanning segments follow: residues 9–29 (LLLIAFGLFYLLPLATHGLWI), 80–102 (LFGVRVASALSTGLSVVLAYLLA), 112–132 (SLASALLYMSFTVVALQAGYA), 133–153 (NLDPQFTFWVNLSLVALWFTF), 176–196 (FMTKGFLAWLLPVLVALPYAI), 204–224 (LLIYGGIGVLVAILISLPWAL), 257–277 (WWYYLPLLVGFSVPWVLLLPA), 290–310 (SSGFLLLWLVLPLAFFSLSKG), 312–332 (LPAYILPCLLPLALLMGNTLV), 342–362 (LLAFNGVLNLVAGLLGLLALV), 377–397 (HLVLVYVLLLGWILSNLLQAM), and 402–422 (LWAAPALGSFLLVALAPAALP).

The protein belongs to the glycosyltransferase 83 family.

It localises to the cell inner membrane. It catalyses the reaction 4-amino-4-deoxy-alpha-L-arabinopyranosyl di-trans,octa-cis-undecaprenyl phosphate + lipid IVA = lipid IIA + di-trans,octa-cis-undecaprenyl phosphate.. Its pathway is lipopolysaccharide metabolism; 4-amino-4-deoxy-beta-L-arabinose-lipid A biosynthesis. Its function is as follows. Catalyzes the transfer of the L-Ara4N moiety of the glycolipid undecaprenyl phosphate-alpha-L-Ara4N to lipid A. The modified arabinose is attached to lipid A and is required for resistance to polymyxin and cationic antimicrobial peptides. In Pseudomonas fluorescens (strain ATCC BAA-477 / NRRL B-23932 / Pf-5), this protein is Undecaprenyl phosphate-alpha-4-amino-4-deoxy-L-arabinose arabinosyl transferase 1.